The sequence spans 32 residues: Kappa-conotoxin SrXIA (32 aa).

4 disulfides stabilise this stretch: cysteine 1–cysteine 15, cysteine 8–cysteine 20, cysteine 14–cysteine 24, and cysteine 19–cysteine 28. A 4-carboxyglutamate mark is found at glutamate 9 and glutamate 10. Proline amide is present on proline 32.

It belongs to the conotoxin I2 superfamily. As to expression, expressed by the venom duct.

Its subcellular location is the secreted. Functionally, kappa-conotoxins bind and inhibit voltage-gated potassium channels. This toxin inhibits Kv1.2/KCNA2 and Kv1.6/KCNA6. Produces stiffening of body, limbs and tail when injected intracranially into mice. The sequence is that of Kappa-conotoxin SrXIA from Conus spurius (Alphabet cone).